A 185-amino-acid chain; its full sequence is Mu-like prophage FluMu protein gp16 (185 aa).

The protein to phage Mu protein gp16.

The protein is Mu-like prophage FluMu protein gp16 of Haemophilus influenzae (strain ATCC 51907 / DSM 11121 / KW20 / Rd).